Reading from the N-terminus, the 260-residue chain is Adenosylcobinamide-GDP ribazoletransferase (260 aa).

Helical transmembrane passes span 40–60, 64–84, 117–137, 192–212, 214–234, and 240–260; these read AFPL…FMAY, LPPL…TGAL, FAAL…MTII, GIGL…LSLI, ALVL…AKIG, and TLGA…VMAL.

The protein belongs to the CobS family. Mg(2+) serves as cofactor.

Its subcellular location is the cell inner membrane. The catalysed reaction is alpha-ribazole + adenosylcob(III)inamide-GDP = adenosylcob(III)alamin + GMP + H(+). It carries out the reaction alpha-ribazole 5'-phosphate + adenosylcob(III)inamide-GDP = adenosylcob(III)alamin 5'-phosphate + GMP + H(+). Its pathway is cofactor biosynthesis; adenosylcobalamin biosynthesis; adenosylcobalamin from cob(II)yrinate a,c-diamide: step 7/7. In terms of biological role, joins adenosylcobinamide-GDP and alpha-ribazole to generate adenosylcobalamin (Ado-cobalamin). Also synthesizes adenosylcobalamin 5'-phosphate from adenosylcobinamide-GDP and alpha-ribazole 5'-phosphate. This chain is Adenosylcobinamide-GDP ribazoletransferase, found in Brucella anthropi (strain ATCC 49188 / DSM 6882 / CCUG 24695 / JCM 21032 / LMG 3331 / NBRC 15819 / NCTC 12168 / Alc 37) (Ochrobactrum anthropi).